Consider the following 50-residue polypeptide: Sperm protamine P1 (50 aa).

2 disulfide bridges follow: Cys-7–Cys-15 and Cys-38–Cys-46.

The protein belongs to the protamine P1 family. In terms of assembly, cross-linked by interchain disulfide bonds around the DNA-helix. Testis.

The protein localises to the nucleus. The protein resides in the chromosome. Functionally, protamines substitute for histones in the chromatin of sperm during the haploid phase of spermatogenesis. They compact sperm DNA into a highly condensed, stable and inactive complex. This is Sperm protamine P1 (PRM1) from Equus asinus (Donkey).